A 276-amino-acid chain; its full sequence is uncharacterized protein (276 aa).

This sequence to E.coli YjfZ.

This is an uncharacterized protein from Escherichia coli (strain K12).